Reading from the N-terminus, the 146-residue chain is Leghemoglobin Lb120-29 (146 aa).

The Globin domain maps to 2–146; it reads GFTDKQEALV…LASAIKKAMS (145 aa). 2 positions are modified to nitrated tyrosine: Tyr-24 and Tyr-29. Ser-44 serves as a coordination point for heme b. Ser-44 carries the phosphoserine modification. Residue His-61 participates in O2 binding. 3 residues coordinate heme b: Lys-64, His-93, and Lys-96. Tyr-134 bears the Nitrated tyrosine mark.

This sequence belongs to the plant globin family. In terms of assembly, monomer. Nitrated in effective nodules and particularly in hypoxic conditions; this mechanism may play a protective role in the symbiosis by buffering toxic peroxynitrite NO(2)(-). Nitration level decrease during nodule senescence. Post-translationally, phosphorylation at Ser-44 disrupts the molecular environment of its porphyrin ring oxygen binding pocket, thus leading to a reduced oxygen consumption and to the delivery of oxygen O(2) to symbiosomes. Root nodules.

It is found in the cytoplasm. It localises to the cytosol. Its subcellular location is the nucleus. Functionally, leghemoglobin that reversibly binds oxygen O(2) through a pentacoordinated heme iron. In root nodules, facilitates the diffusion of oxygen to the bacteroids while preventing the bacterial nitrogenase from being inactivated by buffering dioxygen, nitric oxide and carbon monoxide, and promoting the formation of reactive oxygen species (ROS, e.g. H(2)O(2)). This role is essential for symbiotic nitrogen fixation (SNF). The sequence is that of Leghemoglobin Lb120-29 from Pisum sativum (Garden pea).